The primary structure comprises 488 residues: 3-octaprenyl-4-hydroxybenzoate carboxy-lyase (488 aa).

Residue asparagine 172 participates in Mn(2+) binding. Prenylated FMN is bound by residues 175–177 (IYR), 189–191 (RWL), and 194–195 (RG). Glutamate 238 is a Mn(2+) binding site. Aspartate 287 (proton donor) is an active-site residue.

This sequence belongs to the UbiD family. In terms of assembly, homohexamer. Requires prenylated FMN as cofactor. It depends on Mn(2+) as a cofactor.

The protein localises to the cell membrane. The enzyme catalyses a 4-hydroxy-3-(all-trans-polyprenyl)benzoate + H(+) = a 2-(all-trans-polyprenyl)phenol + CO2. It functions in the pathway cofactor biosynthesis; ubiquinone biosynthesis. In terms of biological role, catalyzes the decarboxylation of 3-octaprenyl-4-hydroxy benzoate to 2-octaprenylphenol, an intermediate step in ubiquinone biosynthesis. This is 3-octaprenyl-4-hydroxybenzoate carboxy-lyase from Hahella chejuensis (strain KCTC 2396).